The following is a 157-amino-acid chain: Small ribosomal subunit protein uS7 (157 aa).

The protein belongs to the universal ribosomal protein uS7 family. Part of the 30S ribosomal subunit. Contacts proteins S9 and S11.

Its function is as follows. One of the primary rRNA binding proteins, it binds directly to 16S rRNA where it nucleates assembly of the head domain of the 30S subunit. Is located at the subunit interface close to the decoding center, probably blocks exit of the E-site tRNA. This Protochlamydia amoebophila (strain UWE25) protein is Small ribosomal subunit protein uS7.